Consider the following 408-residue polypeptide: NADH-quinone oxidoreductase subunit H (408 aa).

Helical transmembrane passes span 18-38 (LAKA…AILI), 84-104 (PIYL…FSVI), 124-144 (LPVA…GIVL), 165-185 (VVSY…YAGT), 198-218 (TWFV…MVGE), 261-281 (SALA…FNLI), 288-308 (WWPL…YFWL), 321-341 (MALG…VVAI), and 353-373 (WAAW…WGLA). The interval 381 to 408 (VQPPPPQSTGAYPVPPLPSVGTKETADA) is disordered. Residues 382–398 (QPPPPQSTGAYPVPPLP) are compositionally biased toward pro residues.

It belongs to the complex I subunit 1 family. As to quaternary structure, NDH-1 is composed of 14 different subunits. Subunits NuoA, H, J, K, L, M, N constitute the membrane sector of the complex.

It localises to the cell membrane. The catalysed reaction is a quinone + NADH + 5 H(+)(in) = a quinol + NAD(+) + 4 H(+)(out). NDH-1 shuttles electrons from NADH, via FMN and iron-sulfur (Fe-S) centers, to quinones in the respiratory chain. The immediate electron acceptor for the enzyme in this species is believed to be menaquinone. Couples the redox reaction to proton translocation (for every two electrons transferred, four hydrogen ions are translocated across the cytoplasmic membrane), and thus conserves the redox energy in a proton gradient. This subunit may bind ubiquinone. The polypeptide is NADH-quinone oxidoreductase subunit H (Mycolicibacterium smegmatis (strain ATCC 700084 / mc(2)155) (Mycobacterium smegmatis)).